The following is a 1838-amino-acid chain: Type III effector DspE (1838 aa).

Residues M1–A12 are compositionally biased toward basic and acidic residues. 6 disordered regions span residues M1 to Q72, K86 to Q163, M182 to P264, L281 to S300, D398 to L418, and N1480 to R1505. Over residues A27–A46 the composition is skewed to low complexity. The segment covering S91–K103 has biased composition (polar residues). Residues L110 to H120 are compositionally biased toward basic and acidic residues. Polar residues predominate over residues G407–L418. Residues N1480–S1502 show a composition bias toward low complexity.

It belongs to the AvrE family. As to quaternary structure, interacts with the chaperone DspF (DspB/F).

It localises to the secreted. Its subcellular location is the host cell. Its activity is regulated as follows. Polyamidoamine dendrimers inhibit channel and virulence activities. Major virulence factor that may function as a water- and solute-permeable channel dedicated to creating osmotic/water potential perturbation and a water- and nutrient-rich apoplast in which bacteria multiply within the infected plant tissues. Expression in Xenopus oocytes results in inward and outward currents, permeability to water and osmolarity-dependent oocyte swelling and bursting. Functionally, acts as a major cell-death inducer during fire blight, a necrotic disease affecting plants of the rosaceous family, and during hypersensitive response (HR) on non-host plants. Essential for pathogenicity on host plants. Contributes quantitatively and in a strain-dependent fashion to HR elicitation in non-host plants such as tobacco. Induces cell death in leaves of apple, a host plant, and tobacco, a non-host plant. Also triggers necrosis in the widely used model, non-host, N.benthamiana and in yeast. Required for the transient multiplication and survival of E.amylovora in non-host A.thaliana leaves. In A.thaliana, triggers electrolyte leakage, activation of defense pathways, reactive oxygen species (ROS) accumulation and cell death. The toxicity of DspE in A.thaliana is associated with an early repression of de novo protein synthesis. The sequence is that of Type III effector DspE from Erwinia amylovora (Fire blight bacteria).